The primary structure comprises 513 residues: Xyloglucan 6-xylosyltransferase 4 (513 aa).

Residues 1–39 (MFQDGSRSSGSGRGLSTTAVSNGGWRTRGFLRGWQIQNT) are Cytoplasmic-facing. The chain crosses the membrane as a helical; Signal-anchor for type II membrane protein span at residues 40 to 60 (LFNNIKFMILCCFVTILILLG). Over 61-513 (TIRVGNLGSS…IRRMHMETKP (453 aa)) the chain is Lumenal. 5 N-linked (GlcNAc...) asparagine glycosylation sites follow: asparagine 76, asparagine 110, asparagine 142, asparagine 174, and asparagine 490.

The protein belongs to the glycosyltransferase 34 family.

The protein localises to the golgi apparatus membrane. It carries out the reaction Transfers an alpha-D-xylosyl residue from UDP-D-xylose to a glucose residue in xyloglucan, forming an alpha-(1-&gt;6)-D-xylosyl-D-glucose linkage.. Its function is as follows. Xylosyltransferase specific to UDP-D-xylose that accepts cellohexaose as substrate to produce xyloglucan. This chain is Xyloglucan 6-xylosyltransferase 4, found in Arabidopsis thaliana (Mouse-ear cress).